A 238-amino-acid polypeptide reads, in one-letter code: Sugar fermentation stimulation protein homolog (238 aa).

It belongs to the SfsA family.

In Bartonella tribocorum (strain CIP 105476 / IBS 506), this protein is Sugar fermentation stimulation protein homolog.